A 261-amino-acid polypeptide reads, in one-letter code: MLICNDKSNPKTLLEEIMALRPWRKGPFEISQIKIDSEWDSSIKWDLVKNATPLKDKVVADVGCNNGYYLFKMLEHGPKSLVGFDPGVLVKKQFEFLAPFFDKEKKIIYESLGVEDLHEKYPNAFDVIFCLGVLYHRKSPLEALKALYHALKIKGELVLDTLIIDSPLDIALCPKKTYAKMKNVYFIPSVSALKGWCERVGFENFEILSVLKTTPKEQRKTDFILGQSLEDFLDKTDPSKTLEGYDAPLRGYFKMLKPSKR.

Carboxy-S-adenosyl-L-methionine-binding positions include Lys-25, Trp-39, Lys-44, Gly-63, 114-115, Tyr-135, and Arg-250; that span reads VE.

It belongs to the class I-like SAM-binding methyltransferase superfamily. CmoB family. Homotetramer.

The enzyme catalyses carboxy-S-adenosyl-L-methionine + 5-hydroxyuridine(34) in tRNA = 5-carboxymethoxyuridine(34) in tRNA + S-adenosyl-L-homocysteine + H(+). Functionally, catalyzes carboxymethyl transfer from carboxy-S-adenosyl-L-methionine (Cx-SAM) to 5-hydroxyuridine (ho5U) to form 5-carboxymethoxyuridine (cmo5U) at position 34 in tRNAs. This is tRNA U34 carboxymethyltransferase from Helicobacter pylori (strain ATCC 700392 / 26695) (Campylobacter pylori).